A 242-amino-acid chain; its full sequence is Probable transcriptional regulatory protein NMB1648 (242 aa).

It belongs to the TACO1 family.

It localises to the cytoplasm. The protein is Probable transcriptional regulatory protein NMB1648 of Neisseria meningitidis serogroup B (strain ATCC BAA-335 / MC58).